The primary structure comprises 558 residues: Ribonuclease J (558 aa).

Residues histidine 81, histidine 83, aspartate 85, histidine 86, histidine 148, and aspartate 170 each contribute to the Zn(2+) site. Substrate is bound at residue 371 to 375 (HVSGH). Residue histidine 397 participates in Zn(2+) binding.

This sequence belongs to the metallo-beta-lactamase superfamily. RNA-metabolizing metallo-beta-lactamase-like family. Bacterial RNase J subfamily. Homodimer, may be a subunit of the RNA degradosome. It depends on Zn(2+) as a cofactor.

It is found in the cytoplasm. In terms of biological role, an RNase that has 5'-3' exonuclease and possibly endoonuclease activity. Involved in maturation of rRNA and in some organisms also mRNA maturation and/or decay. In Mycobacterium tuberculosis (strain CDC 1551 / Oshkosh), this protein is Ribonuclease J.